The sequence spans 549 residues: MVGMSMQPYGIQSMLKEGYRHLSGLDEAVIKNIEACKELSTITRTSLGPNGMNKMVINHLDKLFVTNDAATIVNELEIQHPAAKLLVLAAKAQQEEIGDGANLTISFAGELLQNAEELIRMGLHPSEIISGYTKAVSKAVEILEQLVETGSETMDVRNKDEVISRMRAAVASKQFGQEEIICSLVTDACIQVCPKNPTNFNVDNVRVSKLLGGGLHNSCIVRGMVLKSDAVGSIKRMEKAKVAVFAGGVDTTATETKGTVLIHSAEQLENYAKTEEAKVEELIKAVAESGAKVIVSGGSIGEMALHFCERYKIMVLKISSKFELRRFCRTAGAVAHLKLSRPSPEDLGYVDSISVEEIGGVTVTIARNEEGGNSISTVVLRGSTDSILDDLERAVDDGVNTYKAMCRDSRIVPGAAATEIELAQRLKEYANAEIGLDKYAITKYAESFEFVPKTLADNAGLNAMEIIAALYTGHGSGNTKLGIDLEEGACKDVSETKVWDLFATKLFALKYASDAACTVLRVDQIIMAKPAGGPRRDAAQAAGAGAEED.

The protein belongs to the TCP-1 chaperonin family. Heterooligomeric complex of about 850 to 900 kDa that forms two stacked rings, 12 to 16 nm in diameter. Interacts with CCT3, KNAT1, STM and TTG1. Expressed in shoot meristems, root tip, vasculature and leaf epidermis.

It is found in the cytoplasm. In terms of biological role, molecular chaperone; assists the folding of proteins upon ATP hydrolysis. Known to play a role, in vitro, in the folding of actin and tubulin. Contributes to stem cell maintenance through its impact on transcription factors trafficking through plasmodesmata. Probably involved in refolding translocated, partially unfolded proteins, including viral movement proteins. The chain is T-complex protein 1 subunit theta from Arabidopsis thaliana (Mouse-ear cress).